The primary structure comprises 411 residues: Alpha-N-acetylgalactosaminidase (411 aa).

The first 17 residues, 1–17, serve as a signal peptide directing secretion; that stretch reads MLLKTVLLLGHVAQVLM. Disulfide bonds link cysteine 38/cysteine 80 and cysteine 42/cysteine 49. Position 78–79 (78–79) interacts with substrate; sequence DD. The N-linked (GlcNAc...) asparagine glycan is linked to asparagine 124. A disulfide bridge links cysteine 127 with cysteine 158. Lysine 154 serves as a coordination point for substrate. Aspartate 156 acts as the Nucleophile in catalysis. Asparagine 177 carries N-linked (GlcNAc...) asparagine glycosylation. Cysteine 187 and cysteine 209 are disulfide-bonded. Serine 188 lines the substrate pocket. A glycan (N-linked (GlcNAc...) asparagine) is linked at asparagine 201. Arginine 213 and aspartate 217 together coordinate substrate. Aspartate 217 functions as the Proton donor in the catalytic mechanism. Residues serine 322 and serine 332 each carry the phosphoserine modification. Residues asparagine 359 and asparagine 385 are each glycosylated (N-linked (GlcNAc...) asparagine).

This sequence belongs to the glycosyl hydrolase 27 family. As to quaternary structure, homodimer.

The protein resides in the lysosome. It catalyses the reaction Cleavage of non-reducing alpha-(1-&gt;3)-N-acetylgalactosamine residues from human blood group A and AB mucin glycoproteins, Forssman hapten and blood group A lacto series glycolipids.. The enzyme catalyses a neolactoside IV(3)-alpha-GalNAc,IV(2)-alpha-Fuc-nLc4Cer(d18:1(4E)) + H2O = a neolactoside IV(2)-alpha-Fuc-nLc4Cer(d18:1(4E)) + N-acetyl-alpha-D-galactosamine. It carries out the reaction a neolactoside IV(3)-alpha-GalNAc,IV(2)-alpha-Fuc-nLc4Cer(d18:0) + H2O = a neolactoside IV(2)-alpha-Fuc-nLc4Cer(d18:0) + N-acetyl-alpha-D-galactosamine. The catalysed reaction is a globoside IV3GalNAc-Gb4Cer + H2O = N-acetyl-alpha-D-galactosamine + a globoside Gb4Cer. Its function is as follows. Removes terminal alpha-N-acetylgalactosamine residues from glycolipids and glycopeptides. Required for the breakdown of glycolipids. This chain is Alpha-N-acetylgalactosaminidase, found in Homo sapiens (Human).